Here is a 499-residue protein sequence, read N- to C-terminus: GTPase Der (499 aa).

2 consecutive EngA-type G domains span residues 3–166 (PVVA…LETL) and 213–386 (IKFA…QSAT). Residues 9–16 (GRPNVGKS), 56–60 (DTGGI), 118–121 (NKTD), 219–226 (GRPNVGKS), 266–270 (DTAGV), and 331–334 (NKWD) each bind GTP. The KH-like domain maps to 387 to 471 (RRTSTAMLTR…PIRVEFQESA (85 aa)). The segment at 476-499 (GRKNTMTLSQERQRKRLLKAKTKK) is disordered. Basic residues predominate over residues 488-499 (QRKRLLKAKTKK).

It belongs to the TRAFAC class TrmE-Era-EngA-EngB-Septin-like GTPase superfamily. EngA (Der) GTPase family. As to quaternary structure, associates with the 50S ribosomal subunit.

In terms of biological role, GTPase that plays an essential role in the late steps of ribosome biogenesis. The chain is GTPase Der from Aeromonas salmonicida (strain A449).